Here is an 879-residue protein sequence, read N- to C-terminus: Prostaglandin F2 receptor negative regulator (879 aa).

The signal sequence occupies residues 1 to 25 (MGRLASRPLLLALLSLALCRGRVVR). Ig-like C2-type domains are found at residues 26–129 (VPTA…ATVQ) and 149–268 (PSAR…KAVE). Residues 26-832 (VPTATLVRVV…MDVLNAFKYP (807 aa)) are Extracellular-facing. Disulfide bonds link Cys43–Cys119 and Cys169–Cys247. A glycan (N-linked (GlcNAc...) asparagine) is linked at Asn44. Thr271 is subject to Phosphothreonine. Ig-like C2-type domains are found at residues 276–394 (PSVL…EAVS), 406–536 (PDYQ…DVFS), 544–662 (ALED…AWSP), and 688–813 (PIFN…AEIH). 4 N-linked (GlcNAc...) asparagine glycosylation sites follow: Asn286, Asn300, Asn383, and Asn413. Cysteines 299 and 373 form a disulfide. The short motif at 424–427 (PTEL) is the Endoplasmic reticulum retention signal element. An intrachain disulfide couples Cys429 to Cys515. N-linked (GlcNAc...) asparagine glycosylation is found at Asn525, Asn600, Asn618, and Asn691. A disulfide bridge links Cys571 with Cys655. Residues 703–705 (RGD) carry the Cell attachment site motif. Cys711 and Cys793 form a disulfide bridge. Residues 833 to 853 (LLIGVGLSTVIGLLSCLIGYC) form a helical membrane-spanning segment. Over 854–879 (SSHWCCKKEVQETRRERRRLMSMEMD) the chain is Cytoplasmic.

In terms of assembly, interacts with CD9 and CD81. Part of a complex composed of CD9, CD81 and IGSF8. Also seems to interact with CD63, CD82 and CD151.

It is found in the endoplasmic reticulum membrane. It localises to the golgi apparatus. The protein localises to the trans-Golgi network membrane. Its function is as follows. Inhibits the binding of prostaglandin F2-alpha (PGF2-alpha) to its specific FP receptor, by decreasing the receptor number rather than the affinity constant. Functional coupling with the prostaglandin F2-alpha receptor seems to occur. In myoblasts, associates with tetraspanins CD9 and CD81 to prevent myotube fusion during muscle regeneration. The sequence is that of Prostaglandin F2 receptor negative regulator (PTGFRN) from Homo sapiens (Human).